The chain runs to 54 residues: Large ribosomal subunit protein bL33A (54 aa).

The protein belongs to the bacterial ribosomal protein bL33 family.

This Saccharopolyspora erythraea (strain ATCC 11635 / DSM 40517 / JCM 4748 / NBRC 13426 / NCIMB 8594 / NRRL 2338) protein is Large ribosomal subunit protein bL33A.